The primary structure comprises 459 residues: Cysteine--tRNA ligase (459 aa).

Cysteine 27 lines the Zn(2+) pocket. The 'HIGH' region motif lies at 29–39; it reads PTVYDDAHLGH. Positions 202, 231, and 235 each coordinate Zn(2+). Positions 263–267 match the 'KMSKS' region motif; the sequence is KMSKS. Lysine 266 is a binding site for ATP.

The protein belongs to the class-I aminoacyl-tRNA synthetase family. In terms of assembly, monomer. Zn(2+) is required as a cofactor.

It is found in the cytoplasm. The enzyme catalyses tRNA(Cys) + L-cysteine + ATP = L-cysteinyl-tRNA(Cys) + AMP + diphosphate. This is Cysteine--tRNA ligase from Campylobacter fetus subsp. fetus (strain 82-40).